A 260-amino-acid chain; its full sequence is DNA repair protein RecO (260 aa).

It belongs to the RecO family.

Functionally, involved in DNA repair and RecF pathway recombination. The sequence is that of DNA repair protein RecO from Streptococcus suis (strain 98HAH33).